A 259-amino-acid chain; its full sequence is Major prion protein (259 aa).

The first 24 residues, 1–24 (MGKIQLGYWILVLFIVTWSDLGLC), serve as a signal peptide directing secretion. The interaction with GRB2, ERI3 and SYN1 stretch occupies residues 25 to 235 (KKPKPRPGGG…EYEAAAQRAY (211 aa)). Residues 29–110 (PRPGGGWNSG…GYNKWKPDKP (82 aa)) are disordered. Cu(2+) is bound by residues G63, G64, H72, G74, H82, G84, H92, and G94. A compositionally biased stretch (gly residues) spans 91 to 101 (PHGGSNWGQGG). Cysteines 184 and 219 form a disulfide. 2 N-linked (GlcNAc...) asparagine glycosylation sites follow: N186 and N202. The GPI-anchor amidated asparagine moiety is linked to residue N236. Positions 237–259 (MAFFSAPPVTLLFLSFLIFLIVS) are cleaved as a propeptide — removed in mature form.

The protein belongs to the prion family. Monomer and homodimer. Has a tendency to aggregate into amyloid fibrils containing a cross-beta spine, formed by a steric zipper of superposed beta-strands. Soluble oligomers may represent an intermediate stage on the path to fibril formation. Copper binding may promote oligomerization. Interacts with GRB2, APP, ERI3/PRNPIP and SYN1. Mislocalized cytosolically exposed PrP interacts with MGRN1; this interaction alters MGRN1 subcellular location and causes lysosomal enlargement. Interacts with KIAA1191.

Its subcellular location is the cell membrane. The protein resides in the golgi apparatus. Its function is as follows. Its primary physiological function is unclear. Has cytoprotective activity against internal or environmental stresses. May play a role in neuronal development and synaptic plasticity. May be required for neuronal myelin sheath maintenance. May play a role in iron uptake and iron homeostasis. Soluble oligomers are toxic to cultured neuroblastoma cells and induce apoptosis (in vitro). Association with GPC1 (via its heparan sulfate chains) targets PRNP to lipid rafts. Also provides Cu(2+) or Zn(2+) for the ascorbate-mediated GPC1 deaminase degradation of its heparan sulfate side chains. The chain is Major prion protein (PRNP) from Trichosurus vulpecula (Brush-tailed possum).